The chain runs to 89 residues: MALDQQAKAKIRAEYATVEGDTGSPEVQVAVLTKRIADLTEHLKVHKHDHHSRRGLLLLVGRRRRLLNYVQKKDINRYRSLIERLGLRR.

The protein belongs to the universal ribosomal protein uS15 family. In terms of assembly, part of the 30S ribosomal subunit. Forms a bridge to the 50S subunit in the 70S ribosome, contacting the 23S rRNA.

Its function is as follows. One of the primary rRNA binding proteins, it binds directly to 16S rRNA where it helps nucleate assembly of the platform of the 30S subunit by binding and bridging several RNA helices of the 16S rRNA. Forms an intersubunit bridge (bridge B4) with the 23S rRNA of the 50S subunit in the ribosome. This chain is Small ribosomal subunit protein uS15, found in Salinispora tropica (strain ATCC BAA-916 / DSM 44818 / JCM 13857 / NBRC 105044 / CNB-440).